A 176-amino-acid polypeptide reads, in one-letter code: Centromere protein R (176 aa).

Lys8 participates in a covalent cross-link: Glycyl lysine isopeptide (Lys-Gly) (interchain with G-Cter in SUMO2). Ser17 carries the post-translational modification Phosphoserine. Residues 20-50 (PSKIVRKKSITAYSPTTGTYQLSPFSSPATP) form a DD1 region. Lys22 participates in a covalent cross-link: Glycyl lysine isopeptide (Lys-Gly) (interchain with G-Cter in SUMO2). At Ser28 the chain carries Phosphoserine. Positions 34–48 (PTTGTYQLSPFSSPA) are enriched in polar residues. A disordered region spans residues 34–78 (PTTGTYQLSPFSSPATPKEQEHRNGPSNETRKRSNLSSPVRQEST). Over residues 51–65 (KEQEHRNGPSNETRK) the composition is skewed to basic and acidic residues. Residues 63-66 (TRKR) carry the Nuclear localization signal motif. At Ser71 the chain carries Phosphoserine. Residues 82 to 112 (RDGFMVLLSKIEISSEKTMEIMKNLSSIQAL) are a coiled coil. The LXXIL motif motif lies at 171-175 (LKAIL).

As to quaternary structure, homodimer; mediated by the coiled coil domain. Interacts with CCNA2 and MTA1. Interacts with NFKB1 NF-kappa-B subunit. Component of the CENPA-CAD complex, composed of CENPI, CENPK, CENPL, CENPO, CENPP, CENPQ, CENPR and CENPS. The CENPA-CAD complex interacts with the CENPA-NAC complex, at least composed of CENPA, CENPC, CENPH, CENPM, CENPN, CENPT and CENPU. Interacts with TASOR. In terms of tissue distribution, expressed in the spermatogonia and spermatocytes.

The protein localises to the nucleus. The protein resides in the chromosome. Its subcellular location is the centromere. It is found in the kinetochore. Functionally, transcription coregulator that can have both coactivator and corepressor functions. Involved in the coactivation of nuclear receptors for retinoid X (RXRs) and thyroid hormone (TRs) in a ligand-dependent fashion. In contrast, it does not coactivate nuclear receptors for retinoic acid, vitamin D, progesterone receptor, nor glucocorticoid. Acts as a coactivator for estrogen receptor alpha. Acts as a transcriptional corepressor via its interaction with the NFKB1 NF-kappa-B subunit, possibly by interfering with the transactivation domain of NFKB1. Induces apoptosis in breast cancer cells, but not in other cancer cells, via a caspase-2 mediated pathway that involves mitochondrial membrane permeabilization but does not require other caspases. May also act as an inhibitor of cyclin A-associated kinase. Also acts a component of the CENPA-CAD (nucleosome distal) complex, a complex recruited to centromeres which is involved in assembly of kinetochore proteins, mitotic progression and chromosome segregation. May be involved in incorporation of newly synthesized CENPA into centromeres via its interaction with the CENPA-NAC complex. The protein is Centromere protein R (Itgb3bp) of Mus musculus (Mouse).